An 84-amino-acid polypeptide reads, in one-letter code: DNA-directed RNA polymerase subunit Rpo5 (84 aa).

Belongs to the archaeal Rpo5/eukaryotic RPB5 RNA polymerase subunit family. As to quaternary structure, part of the RNA polymerase complex.

It localises to the cytoplasm. The catalysed reaction is RNA(n) + a ribonucleoside 5'-triphosphate = RNA(n+1) + diphosphate. Functionally, DNA-dependent RNA polymerase (RNAP) catalyzes the transcription of DNA into RNA using the four ribonucleoside triphosphates as substrates. This is DNA-directed RNA polymerase subunit Rpo5 from Saccharolobus islandicus (strain Y.N.15.51 / Yellowstone #2) (Sulfolobus islandicus).